We begin with the raw amino-acid sequence, 293 residues long: Neugrin (293 aa).

An N-terminal signal peptide occupies residues 1-18 (MALSLSLFLGGRVRTSLA). Ser41 is modified (phosphoserine). Disordered regions lie at residues 177-210 (DEVS…EGRD) and 224-254 (TTAL…TLPS). Residue Asn185 is glycosylated (N-linked (GlcNAc...) asparagine). The segment covering 198–210 (HSTDAQKKREGRD) has biased composition (basic and acidic residues).

It belongs to the neugrin family. Forms a regulatory protein-RNA complex, consisting of RCC1L, NGRN, RPUSD3, RPUSD4, TRUB2, FASTKD2 and 16S mt-rRNA. Interacts with 16S mt-rRNA; this interaction is direct. Expressed in heart, brain, liver and kidney. In brain, mainly expressed in neurons rather than glial cells.

Its subcellular location is the nucleus. The protein resides in the secreted. The protein localises to the mitochondrion membrane. Plays an essential role in mitochondrial ribosome biogenesis. As a component of a functional protein-RNA module, consisting of RCC1L, NGRN, RPUSD3, RPUSD4, TRUB2, FASTKD2 and 16S mitochondrial ribosomal RNA (16S mt-rRNA), controls 16S mt-rRNA abundance and is required for intra-mitochondrial translation of core subunits of the oxidative phosphorylation system. This chain is Neugrin (Ngrn), found in Mus musculus (Mouse).